The chain runs to 241 residues: Phycocyanobilin:ferredoxin oxidoreductase (241 aa).

It belongs to the HY2 family.

The enzyme catalyses (2R,3Z)-phycocyanobilin + 4 oxidized [2Fe-2S]-[ferredoxin] = biliverdin IXalpha + 4 reduced [2Fe-2S]-[ferredoxin] + 4 H(+). Functionally, catalyzes the four-electron reduction of biliverdin IX-alpha (2-electron reduction at both the A and D rings); the reaction proceeds via an isolatable 2-electron intermediate, 181,182-dihydrobiliverdin. This is Phycocyanobilin:ferredoxin oxidoreductase from Prochlorococcus marinus (strain MIT 9515).